The chain runs to 333 residues: tRNA N6-adenosine threonylcarbamoyltransferase (333 aa).

Residues His118 and His122 each contribute to the Fe cation site. Substrate is bound by residues 140–144 (VVSGG), Asp173, Gly186, and Asn274. Asp298 contacts Fe cation.

It belongs to the KAE1 / TsaD family. Fe(2+) is required as a cofactor.

The protein resides in the cytoplasm. The enzyme catalyses L-threonylcarbamoyladenylate + adenosine(37) in tRNA = N(6)-L-threonylcarbamoyladenosine(37) in tRNA + AMP + H(+). Required for the formation of a threonylcarbamoyl group on adenosine at position 37 (t(6)A37) in tRNAs that read codons beginning with adenine. Is involved in the transfer of the threonylcarbamoyl moiety of threonylcarbamoyl-AMP (TC-AMP) to the N6 group of A37, together with TsaE and TsaB. TsaD likely plays a direct catalytic role in this reaction. This is tRNA N6-adenosine threonylcarbamoyltransferase from Deinococcus geothermalis (strain DSM 11300 / CIP 105573 / AG-3a).